Consider the following 351-residue polypeptide: Cytochrome c biogenesis protein CcsA (351 aa).

A run of 8 helical transmembrane segments spans residues 17–37 (VLFL…LPAI), 38–58 (NALG…LLGA), 68–88 (LSNL…VHLI), 97–117 (LVGV…TLTL), 143–163 (MMLS…FLVI), 259–279 (IIGL…VWAN), 286–306 (WSWD…AAYL), and 320–340 (AILA…VNLL).

The protein belongs to the CcmF/CycK/Ccl1/NrfE/CcsA family. In terms of assembly, may interact with ccs1.

It is found in the cellular thylakoid membrane. Functionally, required during biogenesis of c-type cytochromes (cytochrome c6 and cytochrome f) at the step of heme attachment. In Nostoc sp. (strain PCC 7120 / SAG 25.82 / UTEX 2576), this protein is Cytochrome c biogenesis protein CcsA.